The primary structure comprises 167 residues: Small ribosomal subunit protein uS5 (167 aa).

The S5 DRBM domain maps to 12 to 75 (LEDQVVSINR…DAAKKSLIEV (64 aa)).

Belongs to the universal ribosomal protein uS5 family. Part of the 30S ribosomal subunit. Contacts proteins S4 and S8.

Functionally, with S4 and S12 plays an important role in translational accuracy. Its function is as follows. Located at the back of the 30S subunit body where it stabilizes the conformation of the head with respect to the body. This chain is Small ribosomal subunit protein uS5, found in Lacticaseibacillus paracasei (strain ATCC 334 / BCRC 17002 / CCUG 31169 / CIP 107868 / KCTC 3260 / NRRL B-441) (Lactobacillus paracasei).